The primary structure comprises 244 residues: Phosphoadenosine 5'-phosphosulfate reductase (244 aa).

Cys-239 acts as the Nucleophile; cysteine thiosulfonate intermediate in catalysis.

It belongs to the PAPS reductase family. CysH subfamily.

Its subcellular location is the cytoplasm. The enzyme catalyses [thioredoxin]-disulfide + sulfite + adenosine 3',5'-bisphosphate + 2 H(+) = [thioredoxin]-dithiol + 3'-phosphoadenylyl sulfate. The protein operates within sulfur metabolism; hydrogen sulfide biosynthesis; sulfite from sulfate: step 3/3. Functionally, catalyzes the formation of sulfite from phosphoadenosine 5'-phosphosulfate (PAPS) using thioredoxin as an electron donor. This is Phosphoadenosine 5'-phosphosulfate reductase from Sodalis glossinidius (strain morsitans).